The sequence spans 1595 residues: DNA-directed RNA polymerase subunit beta'' (1595 aa).

Zn(2+) is bound by residues cysteine 216, cysteine 286, cysteine 294, and cysteine 297.

The protein belongs to the RNA polymerase beta' chain family. RpoC2 subfamily. As to quaternary structure, in plastids the minimal PEP RNA polymerase catalytic core is composed of four subunits: alpha, beta, beta', and beta''. When a (nuclear-encoded) sigma factor is associated with the core the holoenzyme is formed, which can initiate transcription. Zn(2+) is required as a cofactor.

The protein resides in the plastid. It localises to the chloroplast. It carries out the reaction RNA(n) + a ribonucleoside 5'-triphosphate = RNA(n+1) + diphosphate. Functionally, DNA-dependent RNA polymerase catalyzes the transcription of DNA into RNA using the four ribonucleoside triphosphates as substrates. The protein is DNA-directed RNA polymerase subunit beta'' of Bigelowiella natans (Pedinomonas minutissima).